We begin with the raw amino-acid sequence, 31 residues long: uncharacterized protein (31 aa).

Residues 7 to 29 (TVVLINFFAAVGLFTLISMRFGW) form a helical membrane-spanning segment.

It is found in the cell inner membrane. This is an uncharacterized protein from Escherichia coli (strain K12).